The sequence spans 155 residues: Ribosome-binding factor A (155 aa).

Basic and acidic residues-rich tracts occupy residues 116–125 (ARQRDQEVAR) and 142–155 (SPHE…ADGW). A disordered region spans residues 116–155 (ARQRDQEVARQAEGATPAGDANPYKTSPHEGRPESEADGW).

This sequence belongs to the RbfA family. As to quaternary structure, monomer. Binds 30S ribosomal subunits, but not 50S ribosomal subunits or 70S ribosomes.

The protein localises to the cytoplasm. In terms of biological role, one of several proteins that assist in the late maturation steps of the functional core of the 30S ribosomal subunit. Associates with free 30S ribosomal subunits (but not with 30S subunits that are part of 70S ribosomes or polysomes). Required for efficient processing of 16S rRNA. May interact with the 5'-terminal helix region of 16S rRNA. The sequence is that of Ribosome-binding factor A from Corynebacterium kroppenstedtii (strain DSM 44385 / JCM 11950 / CIP 105744 / CCUG 35717).